Reading from the N-terminus, the 60-residue chain is Myrmicitoxin(1)-Pr4a (60 aa).

Residues 1–23 form the signal peptide; sequence MKAIIFLFAVLTVVAIIIPIISG. Positions 24–33 are excised as a propeptide; sequence EPNAGPHAAS. Gln59 carries the glutamine amide modification.

The protein belongs to the formicidae venom clade 2 family. As to expression, expressed by the venom gland.

The protein localises to the secreted. Toxin that causes a rapid and irreversible paralysis when intrathoracically injected into insects (blowflies). Does not cause spontaneous nocifensive behaviors by intraplantar injection in mice. This chain is Myrmicitoxin(1)-Pr4a, found in Pogonomyrmex rugosus (Desert harvester ant).